A 368-amino-acid polypeptide reads, in one-letter code: S-adenosylmethionine decarboxylase proenzyme (368 aa).

Catalysis depends on residues E26 and E29. Residue S83 is the Schiff-base intermediate with substrate; via pyruvic acid of the active site. S83 is subject to Pyruvic acid (Ser); by autocatalysis. C97 serves as the catalytic Proton donor; for catalytic activity. Residues S246 and H261 each act as proton acceptor; for processing activity in the active site.

This sequence belongs to the eukaryotic AdoMetDC family. In terms of assembly, heterotetramer of two alpha and two beta chains. Requires pyruvate as cofactor. Is synthesized initially as an inactive proenzyme. Formation of the active enzyme involves a self-maturation process in which the active site pyruvoyl group is generated from an internal serine residue via an autocatalytic post-translational modification. Two non-identical subunits are generated from the proenzyme in this reaction, and the pyruvate is formed at the N-terminus of the alpha chain, which is derived from the carboxyl end of the proenzyme. The post-translation cleavage follows an unusual pathway, termed non-hydrolytic serinolysis, in which the side chain hydroxyl group of the serine supplies its oxygen atom to form the C-terminus of the beta chain, while the remainder of the serine residue undergoes an oxidative deamination to produce ammonia and the pyruvoyl group blocking the N-terminus of the alpha chain.

It catalyses the reaction S-adenosyl-L-methionine + H(+) = S-adenosyl 3-(methylsulfanyl)propylamine + CO2. The protein operates within amine and polyamine biosynthesis; S-adenosylmethioninamine biosynthesis; S-adenosylmethioninamine from S-adenosyl-L-methionine: step 1/1. Essential for biosynthesis of the polyamines spermidine and spermine. Polyamines are essential for cell proliferation and are implicated in cellular processes, ranging from DNA replication to apoptosis. In Caenorhabditis elegans, this protein is S-adenosylmethionine decarboxylase proenzyme.